We begin with the raw amino-acid sequence, 289 residues long: Shikimate dehydrogenase (NADP(+)) (289 aa).

Shikimate contacts are provided by residues serine 19–serine 21 and threonine 66. Lysine 70 (proton acceptor) is an active-site residue. Positions 91 and 106 each coordinate shikimate. NADP(+)-binding positions include glycine 131–alanine 135 and leucine 229. Residue tyrosine 231 participates in shikimate binding. Glycine 252 lines the NADP(+) pocket.

Belongs to the shikimate dehydrogenase family. In terms of assembly, homodimer.

It carries out the reaction shikimate + NADP(+) = 3-dehydroshikimate + NADPH + H(+). The protein operates within metabolic intermediate biosynthesis; chorismate biosynthesis; chorismate from D-erythrose 4-phosphate and phosphoenolpyruvate: step 4/7. Functionally, involved in the biosynthesis of the chorismate, which leads to the biosynthesis of aromatic amino acids. Catalyzes the reversible NADPH linked reduction of 3-dehydroshikimate (DHSA) to yield shikimate (SA). The protein is Shikimate dehydrogenase (NADP(+)) of Trichormus variabilis (strain ATCC 29413 / PCC 7937) (Anabaena variabilis).